Here is a 114-residue protein sequence, read N- to C-terminus: Replication initiation control protein YabA (114 aa).

The Zn(2+) site is built by His79, Cys81, Cys95, and Cys98.

Belongs to the YabA family. Homotetramer. Interacts with both DnaA and DnaN, acting as a bridge between these two proteins. Zn(2+) is required as a cofactor.

It is found in the cytoplasm. The protein localises to the nucleoid. Involved in control of chromosome replication initiation. Inhibits the cooperative binding of DnaA to the oriC region, thus negatively regulating initiation of chromosome replication. Inhibits the ability of DnaA-ATP to form a helix on DNA; does not disassemble preformed DnaA-DNA helices. Decreases the residence time of DnaA on the chromosome at its binding sites (oriC, replication forks and promoter-binding sites). Tethers DnaA to the replication machinery via the DNA polymerase beta sliding clamp subunit (dnaN). Associates with oriC and other DnaA targets on the chromosome in a DnaA-dependent manner. This Lactobacillus johnsonii (strain CNCM I-12250 / La1 / NCC 533) protein is Replication initiation control protein YabA.